Reading from the N-terminus, the 550-residue chain is CTP synthase (550 aa).

Residues 1–270 (MTKYVFVTGG…DNIVCEALGL (270 aa)) form an amidoligase domain region. Ser13 is a CTP binding site. Ser13 is a binding site for UTP. ATP-binding positions include 14–19 (SLGKGI) and Asp71. Asp71 and Glu144 together coordinate Mg(2+). CTP is bound by residues 151 to 153 (DIE), 191 to 196 (KTKPTQ), and Lys227. UTP contacts are provided by residues 191 to 196 (KTKPTQ) and Lys227. Residues 295-545 (TIGMVGKYVD…IRAALEHKAQ (251 aa)) enclose the Glutamine amidotransferase type-1 domain. Gly356 lines the L-glutamine pocket. Catalysis depends on Cys383, which acts as the Nucleophile; for glutamine hydrolysis. L-glutamine is bound by residues 384–387 (LGMQ) and Glu407. Positions 430–459 (VERRDNSSDLGGTMRKGAQRCPIRPGTRAQ) are disordered. Arg473 lines the L-glutamine pocket. Active-site residues include His518 and Glu520.

Belongs to the CTP synthase family. As to quaternary structure, homotetramer.

The catalysed reaction is UTP + L-glutamine + ATP + H2O = CTP + L-glutamate + ADP + phosphate + 2 H(+). It catalyses the reaction L-glutamine + H2O = L-glutamate + NH4(+). It carries out the reaction UTP + NH4(+) + ATP = CTP + ADP + phosphate + 2 H(+). Its pathway is pyrimidine metabolism; CTP biosynthesis via de novo pathway; CTP from UDP: step 2/2. Its activity is regulated as follows. Allosterically activated by GTP, when glutamine is the substrate; GTP has no effect on the reaction when ammonia is the substrate. The allosteric effector GTP functions by stabilizing the protein conformation that binds the tetrahedral intermediate(s) formed during glutamine hydrolysis. Inhibited by the product CTP, via allosteric rather than competitive inhibition. In terms of biological role, catalyzes the ATP-dependent amination of UTP to CTP with either L-glutamine or ammonia as the source of nitrogen. Regulates intracellular CTP levels through interactions with the four ribonucleotide triphosphates. This chain is CTP synthase, found in Bordetella parapertussis (strain 12822 / ATCC BAA-587 / NCTC 13253).